The following is a 196-amino-acid chain: Protein TEX261 (196 aa).

Helical transmembrane passes span 3–23 (FMYL…TLAV), 42–62 (SRII…LYVF), 70–90 (IGVG…FPFI), 97–117 (FILS…FFAE), and 125–145 (VLAY…VSLS).

It belongs to the SVP26 family.

The protein localises to the membrane. This Pongo abelii (Sumatran orangutan) protein is Protein TEX261 (TEX261).